Consider the following 248-residue polypeptide: Small ribosomal subunit protein uS3 (248 aa).

Residues 38-106 (IREFLSEGLE…QVQLNILEVK (69 aa)) enclose the KH type-2 domain. The span at 214 to 229 (SLMNARDERPSRGGRR) shows a compositional bias: basic and acidic residues. Residues 214 to 248 (SLMNARDERPSRGGRRERPRRGGARRQRAEKKQEG) are disordered. Positions 230–242 (ERPRRGGARRQRA) are enriched in basic residues.

It belongs to the universal ribosomal protein uS3 family. As to quaternary structure, part of the 30S ribosomal subunit. Forms a tight complex with proteins S10 and S14.

Functionally, binds the lower part of the 30S subunit head. Binds mRNA in the 70S ribosome, positioning it for translation. This is Small ribosomal subunit protein uS3 from Corynebacterium urealyticum (strain ATCC 43042 / DSM 7109).